Consider the following 583-residue polypeptide: MEDISEIFDIYAICACCKVLNSNEKAGCFSNKTFKGLGNEGGLPWKCNSVDMKHFSSVTSYVNETNYMRLKWKRDRYMEKNNVKLNTDGIPSVDKLQNIVVMGKASWESIPSKFKPLQNRINIILSRTLKKEDLAKEYNNVIIINSVDDLFPILKCIKYYKCFIIGGASVYKEFLDRNLIKKIYFTRINNAYTCDVLFPDINEDLFKITSISDVYSSNNTTLDFVIYSKTKEIHEEINPNDELFNNTFLGVCDEKNTNFDDEDDYTYFSFNKHKDNIKKNSEHAHHFKIYNSIKYKHHPEYQYLNIIYDIIMHGNKQDDRTGVGVLSKFGYMMKFNLSEYFPLLTTKKLFVRGIIEELLWFIRGETNGNTLLEKNVRIWEANGTREFLDNRKLFHREVNDLGPIYGFQWRHFGAEYTDMHADYKDKGVDQLKNIINLIKNDPTCRRIILCAWNVKDLDQMALPPCHILCQFYVFDGKLSCIMYQRSCDLGLGVPFNIASYSIFTYMIAQVCNLQPAEFIHVLGNAHVYNNHVESLKVQLNRTPYPFPTLKLNPEIKNIEDFTISDFTVQNYVHHDKISMDMAA.

Positions 9–229 (DIYAICACCK…TTLDFVIYSK (221 aa)) constitute a DHFR domain. Residue 36 to 42 (GLGNEGG) participates in NADP(+) binding. Substrate is bound at residue D51. NADP(+)-binding positions include 104-106 (KAS) and 125-128 (LSRT). Substrate-binding residues include I165, Y171, and T186. 166-173 (GGASVYKE) provides a ligand contact to NADP(+). Residues 298–583 (HPEYQYLNII…HDKISMDMAA (286 aa)) form a thymidylate synthase region. DUMP is bound at residue R320. Residue C465 is part of the active site. DUMP-binding positions include H466, 484 to 488 (QRSCD), N496, and 526 to 528 (HVY).

In the N-terminal section; belongs to the dihydrofolate reductase family. The protein in the C-terminal section; belongs to the thymidylate synthase family. Homodimer.

The enzyme catalyses (6S)-5,6,7,8-tetrahydrofolate + NADP(+) = 7,8-dihydrofolate + NADPH + H(+). It catalyses the reaction dUMP + (6R)-5,10-methylene-5,6,7,8-tetrahydrofolate = 7,8-dihydrofolate + dTMP. It functions in the pathway cofactor biosynthesis; tetrahydrofolate biosynthesis; 5,6,7,8-tetrahydrofolate from 7,8-dihydrofolate: step 1/1. Its function is as follows. Bifunctional enzyme. Involved in de novo dTMP biosynthesis. Key enzyme in folate metabolism. Catalyzes an essential reaction for de novo glycine and purine synthesis, DNA precursor synthesis, and for the conversion of dUMP to dTMP. The polypeptide is Bifunctional dihydrofolate reductase-thymidylate synthase (Plasmodium chabaudi).